Here is an 811-residue protein sequence, read N- to C-terminus: MGDDVLGRGSRRDQEIVLVDIVDDDDHDDVPAVRRQDSLYVDATRAGGANHRGGQEESWARTLKLAFQCVGILYGDIGTSPLFVYSSTFKDGVRHPDDLLGALSLIIYSFALFTIVKYVFIALRANDDGDGGTFALYTLISRHAKVSLIPNQQAEDELISKYNTGKPQATLRRARWMKELLETNRAVKIWLFLLTILATAMVISDAVLTPAISVLSAVGGLKEKAPNLTTDEIVWITVATLVVLFAIQRFGTDKIGYLFAPIILLWLLLIGCVGIYNTIKFDTGVLRAFNLKYIIDYFRRNKKDGWISLSGILLCFTGTEALFSDLGYFSIRSIQLSFSFGLVPSVLLAYIGQAAYLREHPEHIANTFYRSTPNVMFWPTFILAVAASIIGSQAMISCAFATISHLQTLNCFPRVKILHTSRQYSGQLYIPEVNFLLCVGACLVTIGFKTTVIIGEAHAICVVFVMIITTLLLTIVMLLVWKVSIWYVALFFIVFMSSESIYLSAVLYQFVHGEYVPVAMSVFLMIVMTVWHYVHVKRYEFELEHTVPRDKVKELLERRDIQRVPGVGLFYTDLVQGIPPVFPHLIEKIPSIHSVLIFVSIKHLPIPSVDRSERFIFRHVDKEEYKVFQCVARYGYRDPMEEAKDFVDALTENLQYYIRDVNFYTTGGDQHIFRSTSYASSIAESFASYEKHSGHAVYAEEMLTPAESFSEHTKQLSGRSKHFKQFQVENMNMQKMEKVQQEQQAILREMENGVVYILGESDIVASPHSSLLNKIIVNYIYSFLRKNCRNGEKMLSIPRSQVLKVGIAYEI.

Residues 1–64 lie on the Cytoplasmic side of the membrane; that stretch reads MGDDVLGRGS…QEESWARTLK (64 aa). Residues 65 to 85 form a helical membrane-spanning segment; sequence LAFQCVGILYGDIGTSPLFVY. Residues 86–102 lie on the Extracellular side of the membrane; it reads SSTFKDGVRHPDDLLGA. A helical transmembrane segment spans residues 103-123; it reads LSLIIYSFALFTIVKYVFIAL. At 124 to 188 the chain is on the cytoplasmic side; it reads RANDDGDGGT…ELLETNRAVK (65 aa). Residues 189–209 form a helical membrane-spanning segment; that stretch reads IWLFLLTILATAMVISDAVLT. Over 210-226 the chain is Extracellular; it reads PAISVLSAVGGLKEKAP. A helical transmembrane segment spans residues 227–247; that stretch reads NLTTDEIVWITVATLVVLFAI. The Cytoplasmic segment spans residues 248-254; it reads QRFGTDK. A helical membrane pass occupies residues 255 to 275; the sequence is IGYLFAPIILLWLLLIGCVGI. Topologically, residues 276–310 are extracellular; it reads YNTIKFDTGVLRAFNLKYIIDYFRRNKKDGWISLS. The helical transmembrane segment at 311 to 331 threads the bilayer; that stretch reads GILLCFTGTEALFSDLGYFSI. The Cytoplasmic portion of the chain corresponds to 332–335; that stretch reads RSIQ. A helical transmembrane segment spans residues 336 to 356; the sequence is LSFSFGLVPSVLLAYIGQAAY. At 357–375 the chain is on the extracellular side; the sequence is LREHPEHIANTFYRSTPNV. A helical transmembrane segment spans residues 376-396; it reads MFWPTFILAVAASIIGSQAMI. Residues 397–434 lie on the Cytoplasmic side of the membrane; sequence SCAFATISHLQTLNCFPRVKILHTSRQYSGQLYIPEVN. A helical transmembrane segment spans residues 435 to 455; that stretch reads FLLCVGACLVTIGFKTTVIIG. Over 456–459 the chain is Extracellular; that stretch reads EAHA. Residues 460-480 form a helical membrane-spanning segment; that stretch reads ICVVFVMIITTLLLTIVMLLV. The Cytoplasmic segment spans residues 481–482; the sequence is WK. The chain crosses the membrane as a helical span at residues 483–503; sequence VSIWYVALFFIVFMSSESIYL. Over 504–515 the chain is Extracellular; sequence SAVLYQFVHGEY. The chain crosses the membrane as a helical span at residues 516 to 536; it reads VPVAMSVFLMIVMTVWHYVHV. At 537 to 811 the chain is on the cytoplasmic side; it reads KRYEFELEHT…VLKVGIAYEI (275 aa).

It belongs to the HAK/KUP transporter (TC 2.A.72.3) family.

It localises to the membrane. In terms of biological role, high-affinity potassium transporter. This Oryza sativa subsp. japonica (Rice) protein is Potassium transporter 27 (HAK27).